The chain runs to 269 residues: Ubiquinone/menaquinone biosynthesis C-methyltransferase UbiE (269 aa).

Residues Thr92, Asp113, and 141–142 each bind S-adenosyl-L-methionine; that span reads NA.

This sequence belongs to the class I-like SAM-binding methyltransferase superfamily. MenG/UbiE family.

It catalyses the reaction a 2-demethylmenaquinol + S-adenosyl-L-methionine = a menaquinol + S-adenosyl-L-homocysteine + H(+). It carries out the reaction a 2-methoxy-6-(all-trans-polyprenyl)benzene-1,4-diol + S-adenosyl-L-methionine = a 5-methoxy-2-methyl-3-(all-trans-polyprenyl)benzene-1,4-diol + S-adenosyl-L-homocysteine + H(+). It participates in quinol/quinone metabolism; menaquinone biosynthesis; menaquinol from 1,4-dihydroxy-2-naphthoate: step 2/2. Its pathway is cofactor biosynthesis; ubiquinone biosynthesis. Its function is as follows. Methyltransferase required for the conversion of demethylmenaquinol (DMKH2) to menaquinol (MKH2) and the conversion of 2-polyprenyl-6-methoxy-1,4-benzoquinol (DDMQH2) to 2-polyprenyl-3-methyl-6-methoxy-1,4-benzoquinol (DMQH2). The protein is Ubiquinone/menaquinone biosynthesis C-methyltransferase UbiE of Brucella suis biovar 1 (strain 1330).